A 352-amino-acid polypeptide reads, in one-letter code: Dihydroorotate dehydrogenase (quinone) (352 aa).

FMN contacts are provided by residues 68–72 (AGFDK) and Thr92. Lys72 is a substrate binding site. 117 to 121 (NAMGF) provides a ligand contact to substrate. FMN is bound by residues Asn146 and Asn179. Asn179 lines the substrate pocket. Ser182 acts as the Nucleophile in catalysis. Substrate is bound at residue Asn184. FMN-binding residues include Lys215 and Thr243. Position 244-245 (244-245 (NT)) interacts with substrate. Residues Gly263, Gly292, and 313-314 (YS) each bind FMN.

It belongs to the dihydroorotate dehydrogenase family. Type 2 subfamily. As to quaternary structure, monomer. FMN is required as a cofactor.

Its subcellular location is the cell membrane. It catalyses the reaction (S)-dihydroorotate + a quinone = orotate + a quinol. It functions in the pathway pyrimidine metabolism; UMP biosynthesis via de novo pathway; orotate from (S)-dihydroorotate (quinone route): step 1/1. Catalyzes the conversion of dihydroorotate to orotate with quinone as electron acceptor. This chain is Dihydroorotate dehydrogenase (quinone), found in Sulfurimonas denitrificans (strain ATCC 33889 / DSM 1251) (Thiomicrospira denitrificans (strain ATCC 33889 / DSM 1251)).